A 285-amino-acid polypeptide reads, in one-letter code: MSQLKPQEIVRLGDIQMANHLPFVLFGGMNVLESKDLAFEIAETYVDICKRLEIPYVFKASFDKANRSSLHSFRGPGLEKGIEWLGEIKKHFNVPIITDVHEPYQAAPVAEVADIIQLPAFLSRQTDLVEAMAKTQAIINIKKAQFLSPREMNHILNKCLEAGNDKLILCERGTSFGYNNLVVDMLGFDTMKEMNVPVFFDVTHALQTPGGRADSAGGRRAQITTLARAGMATGLAGLFLEAHPDPEKAKCDGPCALRLSQLEPFLAQLKELDALVKGFKKLDTH.

It belongs to the KdsA family.

The protein resides in the cytoplasm. It catalyses the reaction D-arabinose 5-phosphate + phosphoenolpyruvate + H2O = 3-deoxy-alpha-D-manno-2-octulosonate-8-phosphate + phosphate. The protein operates within carbohydrate biosynthesis; 3-deoxy-D-manno-octulosonate biosynthesis; 3-deoxy-D-manno-octulosonate from D-ribulose 5-phosphate: step 2/3. It functions in the pathway bacterial outer membrane biogenesis; lipopolysaccharide biosynthesis. The sequence is that of 2-dehydro-3-deoxyphosphooctonate aldolase from Acinetobacter baylyi (strain ATCC 33305 / BD413 / ADP1).